We begin with the raw amino-acid sequence, 262 residues long: Bacteriorhodopsin (262 aa).

Residues 1–13 constitute a propeptide that is removed on maturation; it reads MLELLPTAVEGVS. Gln-14 bears the Pyrrolidone carboxylic acid mark. Residues 14 to 22 are Extracellular-facing; it reads QAQITGRPE. Residues 23–42 traverse the membrane as a helical segment; the sequence is WIWLALGTALMGLGTLYFLV. Over 43 to 56 the chain is Cytoplasmic; sequence KGMGVSDPDAKKFY. Residues 57–75 traverse the membrane as a helical segment; that stretch reads AITTLVPAIAFTMYLSMLL. Over 76–92 the chain is Extracellular; sequence GYGLTMVPFGGEQNPIY. A helical transmembrane segment spans residues 93-109; sequence WARYADWLFTTPLLLLD. Over 110–120 the chain is Cytoplasmic; the sequence is LALLVDADQGT. The chain crosses the membrane as a helical span at residues 121–140; it reads ILALVGADGIMIGTGLVGAL. Residues 141–147 are Extracellular-facing; that stretch reads TKVYSYR. A helical transmembrane segment spans residues 148-167; sequence FVWWAISTAAMLYILYVLFF. The Cytoplasmic portion of the chain corresponds to 168–185; the sequence is GFTSKAESMRPEVASTFK. The chain crosses the membrane as a helical span at residues 186-204; that stretch reads VLRNVTVVLWSAYPVVWLI. Over 205-216 the chain is Extracellular; sequence GSEGAGIVPLNI. Residues 217–236 traverse the membrane as a helical segment; that stretch reads ETLLFMVLDVSAKVGFGLIL. N6-(retinylidene)lysine is present on Lys-229. The Cytoplasmic portion of the chain corresponds to 237–262; the sequence is LRSRAIFGEAEAPEPSAGDGAAATSD.

Homotrimer. In terms of processing, the covalent binding of retinal to the apoprotein, bacterioopsin, generates bacteriorhodopsin.

It localises to the cell membrane. Light-driven proton pump. This chain is Bacteriorhodopsin (bop), found in Halobacterium salinarum (strain ATCC 700922 / JCM 11081 / NRC-1) (Halobacterium halobium).